Reading from the N-terminus, the 149-residue chain is Probable flagellum biosynthesis repressor protein FlbT (149 aa).

It belongs to the FlbT family.

Functionally, has a post-transcriptional repressor function in flagellum biogenesis. Associates with the 5'-UTR of fljK mRNA and promotes its degradation. This chain is Probable flagellum biosynthesis repressor protein FlbT, found in Agrobacterium fabrum (strain C58 / ATCC 33970) (Agrobacterium tumefaciens (strain C58)).